A 297-amino-acid polypeptide reads, in one-letter code: MKELGRLITAMVTPFKKDGTVDYAQAQKLALGLLDSGSDGLVVVGTTGESPTVTWEEEHALFAAVKSAVGNRGKVIAGTGANSTQEALENTLKAEKIGVDACLLVVPYYNKPTQEGLYLHFKTIAEATKLPCILYNVPSRTITHMNPETVIRLSQIPNIVGIKEASGKLDDIAQIINNVRPDFTVWSGNDSDTLPMLAMGSYGVISVASHLVGNQIKDMITSFVSGNTEHAAAIHRHLTPLIRSLFVVSNPIPIKYALNYLGVEVGGLRLPMTEADEKTAALIRESLKGYTIDLPIK.

T47 contacts pyruvate. Y135 (proton donor/acceptor) is an active-site residue. K163 (schiff-base intermediate with substrate) is an active-site residue. Position 205 (I205) interacts with pyruvate.

Belongs to the DapA family. In terms of assembly, homotetramer; dimer of dimers.

The protein resides in the cytoplasm. The enzyme catalyses L-aspartate 4-semialdehyde + pyruvate = (2S,4S)-4-hydroxy-2,3,4,5-tetrahydrodipicolinate + H2O + H(+). The protein operates within amino-acid biosynthesis; L-lysine biosynthesis via DAP pathway; (S)-tetrahydrodipicolinate from L-aspartate: step 3/4. In terms of biological role, catalyzes the condensation of (S)-aspartate-beta-semialdehyde [(S)-ASA] and pyruvate to 4-hydroxy-tetrahydrodipicolinate (HTPA). This chain is 4-hydroxy-tetrahydrodipicolinate synthase, found in Dehalococcoides mccartyi (strain ATCC BAA-2100 / JCM 16839 / KCTC 5957 / BAV1).